The sequence spans 197 residues: Small ribosomal subunit protein uS4c (197 aa).

An S4 RNA-binding domain is found at 82–143; that stretch reads MRLDNILFRL…KQRSKALIQN (62 aa).

The protein belongs to the universal ribosomal protein uS4 family. Part of the 30S ribosomal subunit. Contacts protein S5. The interaction surface between S4 and S5 is involved in control of translational fidelity.

It localises to the plastid. The protein resides in the chloroplast. One of the primary rRNA binding proteins, it binds directly to 16S rRNA where it nucleates assembly of the body of the 30S subunit. In terms of biological role, with S5 and S12 plays an important role in translational accuracy. The protein is Small ribosomal subunit protein uS4c (rps4) of Gladiolus papilio (Goldblotch gladiolus).